The chain runs to 515 residues: Bifunctional purine biosynthesis protein PurH (515 aa).

Residues 1–145 (MTKRVLISVS…KNHASVTVVV (145 aa)) form the MGS-like domain.

This sequence belongs to the PurH family.

The enzyme catalyses (6R)-10-formyltetrahydrofolate + 5-amino-1-(5-phospho-beta-D-ribosyl)imidazole-4-carboxamide = 5-formamido-1-(5-phospho-D-ribosyl)imidazole-4-carboxamide + (6S)-5,6,7,8-tetrahydrofolate. The catalysed reaction is IMP + H2O = 5-formamido-1-(5-phospho-D-ribosyl)imidazole-4-carboxamide. It functions in the pathway purine metabolism; IMP biosynthesis via de novo pathway; 5-formamido-1-(5-phospho-D-ribosyl)imidazole-4-carboxamide from 5-amino-1-(5-phospho-D-ribosyl)imidazole-4-carboxamide (10-formyl THF route): step 1/1. The protein operates within purine metabolism; IMP biosynthesis via de novo pathway; IMP from 5-formamido-1-(5-phospho-D-ribosyl)imidazole-4-carboxamide: step 1/1. The sequence is that of Bifunctional purine biosynthesis protein PurH from Streptococcus pneumoniae serotype 19F (strain G54).